The primary structure comprises 354 residues: Vanillate O-demethylase oxygenase subunit (354 aa).

Residues 7 to 107 (WYVACTPDEI…VEERYGFIWV (101 aa)) form the Rieske domain. Residues Cys-47, His-49, Cys-66, and His-69 each coordinate [2Fe-2S] cluster.

It belongs to the bacterial ring-hydroxylating dioxygenase alpha subunit family. This demethylase system consists of two proteins: an oxygenase and an oxygenase reductase. [2Fe-2S] cluster serves as cofactor. It depends on Fe cation as a cofactor.

It carries out the reaction vanillate + NADH + O2 + H(+) = 3,4-dihydroxybenzoate + formaldehyde + NAD(+) + H2O. Its pathway is xenobiotic degradation; vanillyl-alcohol degradation. This is Vanillate O-demethylase oxygenase subunit (vanA) from Pseudomonas sp. (strain HR199 / DSM 7063).